A 183-amino-acid polypeptide reads, in one-letter code: Large ribosomal subunit protein uL6 (183 aa).

The protein belongs to the universal ribosomal protein uL6 family. In terms of assembly, part of the 50S ribosomal subunit.

In terms of biological role, this protein binds to the 23S rRNA, and is important in its secondary structure. It is located near the subunit interface in the base of the L7/L12 stalk, and near the tRNA binding site of the peptidyltransferase center. The sequence is that of Large ribosomal subunit protein uL6 from Chlamydia trachomatis serovar D (strain ATCC VR-885 / DSM 19411 / UW-3/Cx).